Reading from the N-terminus, the 417-residue chain is uncharacterized protein (417 aa).

10 helical membrane passes run 21-41 (ISSL…AFQL), 50-70 (LLMM…GLLA), 88-108 (LTVI…LLSV), 166-186 (SVFY…FFLP), 217-237 (MPLL…LQIG), 255-275 (LAGW…AITG), 283-303 (LLYF…APFL), 308-328 (IAGI…FGLV), 351-371 (AIQS…GVLA), and 373-393 (WIGV…IGLI).

The protein belongs to the major facilitator superfamily. TCR/Tet family.

It is found in the cell membrane. This is an uncharacterized protein from Bacillus subtilis (strain 168).